The sequence spans 349 residues: Quinolinate synthase (349 aa).

Iminosuccinate-binding residues include His-52 and Ser-69. Position 114 (Cys-114) interacts with [4Fe-4S] cluster. Residues 140–142 and Ser-157 each bind iminosuccinate; that span reads YFN. Cys-201 provides a ligand contact to [4Fe-4S] cluster. Residues 227–229 and Thr-255 contribute to the iminosuccinate site; that span reads HPE. Residue Cys-300 coordinates [4Fe-4S] cluster.

It belongs to the quinolinate synthase family. Type 2 subfamily. [4Fe-4S] cluster serves as cofactor.

It is found in the cytoplasm. It carries out the reaction iminosuccinate + dihydroxyacetone phosphate = quinolinate + phosphate + 2 H2O + H(+). Its pathway is cofactor biosynthesis; NAD(+) biosynthesis; quinolinate from iminoaspartate: step 1/1. Functionally, catalyzes the condensation of iminoaspartate with dihydroxyacetone phosphate to form quinolinate. The polypeptide is Quinolinate synthase (Mycolicibacterium paratuberculosis (strain ATCC BAA-968 / K-10) (Mycobacterium paratuberculosis)).